The chain runs to 281 residues: sn-glycerol-3-phosphate transport system permease protein UgpE (281 aa).

A run of 6 helical transmembrane segments spans residues 16 to 36, 85 to 105, 113 to 133, 142 to 162, 202 to 222, and 247 to 267; these read LILG…AATL, FSIT…IVWF, FFWM…FPTV, LNSY…TFLF, ALFV…LLII, and WNQV…IVLA. The ABC transmembrane type-1 domain occupies 77-268; sequence MLNSFIMAFS…IPPVVIVLAM (192 aa).

Belongs to the binding-protein-dependent transport system permease family. UgpAE subfamily. The complex is composed of two ATP-binding proteins (UgpC), two transmembrane proteins (UgpA and UgpE) and a solute-binding protein (UgpB).

The protein localises to the cell inner membrane. Its function is as follows. Part of the ABC transporter complex UgpBAEC involved in sn-glycerol-3-phosphate (G3P) import. Probably responsible for the translocation of the substrate across the membrane. This Salmonella typhi protein is sn-glycerol-3-phosphate transport system permease protein UgpE (ugpE).